The sequence spans 189 residues: ATP-dependent protease subunit HslV (189 aa).

Thr-12 is an active-site residue. Na(+)-binding residues include Ser-172, Cys-175, and Thr-178.

This sequence belongs to the peptidase T1B family. HslV subfamily. A double ring-shaped homohexamer of HslV is capped on each side by a ring-shaped HslU homohexamer. The assembly of the HslU/HslV complex is dependent on binding of ATP.

The protein localises to the cytoplasm. The catalysed reaction is ATP-dependent cleavage of peptide bonds with broad specificity.. Its activity is regulated as follows. Allosterically activated by HslU binding. Its function is as follows. Protease subunit of a proteasome-like degradation complex believed to be a general protein degrading machinery. The sequence is that of ATP-dependent protease subunit HslV from Ehrlichia chaffeensis (strain ATCC CRL-10679 / Arkansas).